A 131-amino-acid chain; its full sequence is Large ribosomal subunit protein uL24 (131 aa).

This sequence belongs to the universal ribosomal protein uL24 family. Part of the 50S ribosomal subunit.

Functionally, one of two assembly initiator proteins, it binds directly to the 5'-end of the 23S rRNA, where it nucleates assembly of the 50S subunit. In terms of biological role, located at the polypeptide exit tunnel on the outside of the subunit. This Korarchaeum cryptofilum (strain OPF8) protein is Large ribosomal subunit protein uL24.